Consider the following 177-residue polypeptide: FMRFamide-related peptides (177 aa).

The signal sequence occupies residues methionine 1–serine 21. A propeptide spanning residues threonine 22 to alanine 32 is cleaved from the precursor. The residue at position 45 (phenylalanine 45) is a Phenylalanine amide. A propeptide spanning residues arginine 47–serine 93 is cleaved from the precursor. A phenylalanine amide mark is found at phenylalanine 102 and phenylalanine 111. Residues arginine 113 to glutamine 131 constitute a propeptide that is removed on maturation. Leucine 143 is modified (leucine amide). Positions arginine 145–alanine 177 are excised as a propeptide. The segment at arginine 145 to alanine 177 is disordered. Residues leucine 149–tyrosine 158 show a composition bias toward acidic residues. Basic and acidic residues predominate over residues glutamate 159–valine 169.

The protein belongs to the FARP (FMRFamide related peptide) family. Only expressed in the CNS and predominantly in the thoracic ganglia. Strongest expression is seen in two pairs of large neurons in each thoracic ganglion. These neurons are ventrolateral neurosecretory cells 1 and 2, they project their axons through transverse nerves into the periphery where axons from the prothoracic ganglion innervate the prothoracic gland.

The protein localises to the secreted. Functionally, regulates ecdysteroidogenesis by direct innervation of the prothoracic gland by reducing cAMP production via the receptor for myosuppressin. The neurons that innervate the prothoracic gland during the fifth instar are most active during days 0-4, after which they reduce and then peak again on day 6. Expression suppresses the biosynthesis of steroid hormones called ecdysteroids that elicit molting and metamorphosis. This is FMRFamide-related peptides from Bombyx mori (Silk moth).